The following is a 680-amino-acid chain: Methionine--tRNA ligase (680 aa).

Positions 15-25 match the 'HIGH' region motif; sequence PYANGPVHIGH. Zn(2+) is bound by residues Cys-147, Cys-150, Cys-160, and Cys-163. The 'KMSKS' region signature appears at 332 to 336; that stretch reads KISTS. Thr-335 contacts ATP. One can recognise a tRNA-binding domain in the interval 579–680; it reads DFLKLDIRVG…AEVAAGSQVK (102 aa).

It belongs to the class-I aminoacyl-tRNA synthetase family. MetG type 1 subfamily. In terms of assembly, homodimer. The cofactor is Zn(2+).

The protein resides in the cytoplasm. It catalyses the reaction tRNA(Met) + L-methionine + ATP = L-methionyl-tRNA(Met) + AMP + diphosphate. Functionally, is required not only for elongation of protein synthesis but also for the initiation of all mRNA translation through initiator tRNA(fMet) aminoacylation. This Porphyromonas gingivalis (strain ATCC BAA-308 / W83) protein is Methionine--tRNA ligase.